The primary structure comprises 995 residues: UPF0182 protein NFA_45260 (995 aa).

Transmembrane regions (helical) follow at residues 18 to 38 (VLLV…RFTD), 63 to 83 (IILF…ALLL), 115 to 135 (FGIG…QSNW), 176 to 196 (FVAV…FGGL), 211 to 231 (IQLA…YWFD), 260 to 280 (KLIL…GVVL), and 288 to 308 (MAAA…PLVV). The interval 904-957 (ATPFGGDPATRPQPGTAPPVVDSTQPPADGGTPQPQTTPPPTGSAAKDAAAAEL) is disordered. 2 stretches are compositionally biased toward low complexity: residues 927–938 (TQPPADGGTPQP) and 946–955 (GSAAKDAAAA).

This sequence belongs to the UPF0182 family.

The protein localises to the cell membrane. This Nocardia farcinica (strain IFM 10152) protein is UPF0182 protein NFA_45260.